Here is a 567-residue protein sequence, read N- to C-terminus: Major facilitator superfamily transporter MG061 (567 aa).

12 consecutive transmembrane segments (helical) span residues 15–35 (ITLWIIVIFGYLLFVVEWFVI), 78–98 (WTITLLRAVGSILCGVVVLKF), 104–124 (VLIMMGIMCVCFPFLIIGDPL), 193–213 (GYALFIIFRSTIAIGGTTLVV), 230–250 (ILSNANLWGFNIGIAVVFTPF), 264–284 (VYIMTVMILVVFANLCLFLWF), 321–341 (LIGVYGIVLILIVNPLTPAWF), 363–383 (TGLATLAIFWVIGYALGFVVF), 405–425 (IVVLLIIIMFAATLGIGSAAG), 426–446 (FALISIFSFIGGAFAWSLSSS), 462–482 (LPILFGFCWGFGYIAYTLFDI), and 503–523 (PGVIVSIVFFLGLIALANLIV).

This sequence belongs to the major facilitator superfamily.

The protein resides in the cell membrane. The polypeptide is Major facilitator superfamily transporter MG061 (Mycoplasma genitalium (strain ATCC 33530 / DSM 19775 / NCTC 10195 / G37) (Mycoplasmoides genitalium)).